A 623-amino-acid polypeptide reads, in one-letter code: MVSKQQTMGFQTEVKQMLHLVVHSLYSNKEIFLRELISNASDALDKLRFLALSNGSLFENDSDLKISIQINEKLQTITISDNGIGLSWEEAVENLGTIAKSGTKEFISQLTGEQAKDSQLIGQFGVGFYSAFIVADKVTVKSRRAGLQPEDGIVWESKGDGEFTIGYEKKLTRGTEITLHLKPENDEFLSDWRIRGIISKYSDHICWPILMKKLSEEGKESKEFETVNKATALWTLQKSEISEEEYKQLYKHISHDYMDPLTWSHNHVEGKHEYITLLYIPAHAPFDLWQHEAKHGLKLYVKRVFIMDEATQFLPRYLRFVKGIVDASDLPLNISREILQDNKQVESIRAACTKRVLSMLEKMATNDKETYQKFWNEFGLVLKEGPIEDFANKEAIAKLLRFSTTASGSEKQEVSLEEYVSRMKEGQDKIYYITASSYNAAKNSPHLEIFRKKGIEVLLLSDKVDEWLVGYMNEFAGKKLQSISKGKIELGDDETSEQIKEQEKTLEPLIKHIKSVLNDRVKDVLLTNRLTDSPACVVADEQDMGLEMQRILQAAGQQVPVSKPIFEINPDHALIKRLHDIQDDNQFELWVTMLFEQAVLAEGGQLDNPADFVNRVNRLLVSS.

The interval 1 to 336 (MVSKQQTMGF…ASDLPLNISR (336 aa)) is a; substrate-binding. A b region spans residues 337–550 (EILQDNKQVE…EQDMGLEMQR (214 aa)). The tract at residues 551 to 623 (ILQAAGQQVP…NRVNRLLVSS (73 aa)) is c.

It belongs to the heat shock protein 90 family. In terms of assembly, homodimer.

The protein resides in the cytoplasm. Its function is as follows. Molecular chaperone. Has ATPase activity. This is Chaperone protein HtpG from Legionella pneumophila (strain Paris).